Consider the following 146-residue polypeptide: Cyanate hydratase (146 aa).

Catalysis depends on residues Arg-87, Glu-90, and Ser-113.

It belongs to the cyanase family.

It catalyses the reaction cyanate + hydrogencarbonate + 3 H(+) = NH4(+) + 2 CO2. Its function is as follows. Catalyzes the reaction of cyanate with bicarbonate to produce ammonia and carbon dioxide. The sequence is that of Cyanate hydratase from Teredinibacter turnerae (strain ATCC 39867 / T7901).